The following is a 443-amino-acid chain: Phosphoglucosamine mutase (443 aa).

Ser-102 serves as the catalytic Phosphoserine intermediate. Ser-102, Asp-241, Asp-243, and Asp-245 together coordinate Mg(2+). Ser-102 carries the phosphoserine modification.

The protein belongs to the phosphohexose mutase family. Mg(2+) is required as a cofactor. Activated by phosphorylation.

The enzyme catalyses alpha-D-glucosamine 1-phosphate = D-glucosamine 6-phosphate. Its function is as follows. Catalyzes the conversion of glucosamine-6-phosphate to glucosamine-1-phosphate. This is Phosphoglucosamine mutase from Albidiferax ferrireducens (strain ATCC BAA-621 / DSM 15236 / T118) (Rhodoferax ferrireducens).